A 217-amino-acid chain; its full sequence is Peptide methionine sulfoxide reductase MsrA (217 aa).

Residue cysteine 56 is part of the active site.

The protein belongs to the MsrA Met sulfoxide reductase family.

It catalyses the reaction L-methionyl-[protein] + [thioredoxin]-disulfide + H2O = L-methionyl-(S)-S-oxide-[protein] + [thioredoxin]-dithiol. The enzyme catalyses [thioredoxin]-disulfide + L-methionine + H2O = L-methionine (S)-S-oxide + [thioredoxin]-dithiol. Has an important function as a repair enzyme for proteins that have been inactivated by oxidation. Catalyzes the reversible oxidation-reduction of methionine sulfoxide in proteins to methionine. This is Peptide methionine sulfoxide reductase MsrA from Corynebacterium glutamicum (strain ATCC 13032 / DSM 20300 / JCM 1318 / BCRC 11384 / CCUG 27702 / LMG 3730 / NBRC 12168 / NCIMB 10025 / NRRL B-2784 / 534).